The following is a 169-amino-acid chain: Peptide deformylase (169 aa).

Fe cation-binding residues include Cys-91 and His-133. Residue Glu-134 is part of the active site. His-137 lines the Fe cation pocket.

The protein belongs to the polypeptide deformylase family. Fe(2+) serves as cofactor.

It catalyses the reaction N-terminal N-formyl-L-methionyl-[peptide] + H2O = N-terminal L-methionyl-[peptide] + formate. Functionally, removes the formyl group from the N-terminal Met of newly synthesized proteins. Requires at least a dipeptide for an efficient rate of reaction. N-terminal L-methionine is a prerequisite for activity but the enzyme has broad specificity at other positions. This is Peptide deformylase from Erwinia tasmaniensis (strain DSM 17950 / CFBP 7177 / CIP 109463 / NCPPB 4357 / Et1/99).